A 94-amino-acid polypeptide reads, in one-letter code: Small ubiquitin-related modifier 3 (94 aa).

K11 participates in a covalent cross-link: Glycyl lysine isopeptide (Lys-Gly) (interchain with G-Cter in SUMO). Residues D15–G92 form the Ubiquitin-like domain. G92 participates in a covalent cross-link: Glycyl lysine isopeptide (Gly-Lys) (interchain with K-? in acceptor proteins). Residues V93–C94 constitute a propeptide that is removed on maturation.

It belongs to the ubiquitin family. SUMO subfamily. As to quaternary structure, interacts with sae2 and ube2i. Covalently attached to a number of proteins. In terms of processing, polymeric chains can be formed through Lys-11 cross-linking. Cleavage of precursor form by a sentrin-specific protease is necessary for function.

The protein localises to the cytoplasm. It localises to the nucleus. The protein resides in the PML body. In terms of biological role, ubiquitin-like protein which can be covalently attached to target lysines either as a monomer or as a lysine-linked polymer. Does not seem to be involved in protein degradation and may function as an antagonist of ubiquitin in the degradation process. Plays a role in a number of cellular processes such as nuclear transport, DNA replication and repair, mitosis and signal transduction. Covalent attachment to its substrates requires prior activation by the E1 complex sae1-sae2 and linkage to the E2 enzyme ube2i. The chain is Small ubiquitin-related modifier 3 (sumo3) from Xenopus laevis (African clawed frog).